The chain runs to 304 residues: Probable endonuclease 4 (304 aa).

Zn(2+) is bound by residues histidine 75, histidine 115, glutamate 151, aspartate 185, histidine 188, histidine 221, aspartate 234, histidine 236, and glutamate 266.

The protein belongs to the AP endonuclease 2 family. Zn(2+) serves as cofactor.

It carries out the reaction Endonucleolytic cleavage to 5'-phosphooligonucleotide end-products.. In terms of biological role, endonuclease IV plays a role in DNA repair. It cleaves phosphodiester bonds at apurinic or apyrimidinic (AP) sites, generating a 3'-hydroxyl group and a 5'-terminal sugar phosphate. The protein is Probable endonuclease 4 of Ureaplasma urealyticum serovar 10 (strain ATCC 33699 / Western).